Reading from the N-terminus, the 174-residue chain is Large ribosomal subunit protein uL15 (174 aa).

Disordered regions lie at residues 1–56 (MKLH…GQMR) and 150–174 (VERR…TPGA). Residues 21-35 (RGIGSGKGKTGGKGM) show a composition bias toward gly residues.

Belongs to the universal ribosomal protein uL15 family. Part of the 50S ribosomal subunit.

Functionally, binds to the 23S rRNA. This Roseiflexus castenholzii (strain DSM 13941 / HLO8) protein is Large ribosomal subunit protein uL15.